The sequence spans 140 residues: MKIALIAHDRKKTLMIKLATAYKHILEKHELYATGTTGMKVMEATGLPVHCFKSGPLGGDQQIGAMISEDNIDLVIFLRDPLSAQPHEPDVTALIRLSDVYEIPLATNIGSAEILLRGVEAGFADFREVIHEGDRRPLAF.

The MGS-like domain occupies 1 to 140 (MKIALIAHDR…HEGDRRPLAF (140 aa)). Residues H8, K12, 34-37 (TGTT), and 54-55 (SG) contribute to the substrate site. D60 acts as the Proton donor/acceptor in catalysis. Substrate is bound at residue H87.

This sequence belongs to the methylglyoxal synthase family.

The catalysed reaction is dihydroxyacetone phosphate = methylglyoxal + phosphate. Its function is as follows. Catalyzes the formation of methylglyoxal from dihydroxyacetone phosphate. The polypeptide is Methylglyoxal synthase (Enterococcus faecalis (strain ATCC 700802 / V583)).